We begin with the raw amino-acid sequence, 115 residues long: Potassium-transporting ATPase potassium-binding subunit (115 aa).

Helical transmembrane passes span 8 to 28 (YFLL…VAFF) and 60 to 80 (SYCT…YGLL).

It belongs to the KdpA family. As to quaternary structure, the system is composed of three essential subunits: KdpA, KdpB and KdpC.

The protein localises to the cell membrane. Part of the high-affinity ATP-driven potassium transport (or Kdp) system, which catalyzes the hydrolysis of ATP coupled with the electrogenic transport of potassium into the cytoplasm. This subunit binds the extracellular potassium ions and delivers the ions to the membrane domain of KdpB through an intramembrane tunnel. This Geobacillus stearothermophilus (Bacillus stearothermophilus) protein is Potassium-transporting ATPase potassium-binding subunit.